The chain runs to 2664 residues: Inositol 1,4,5-trisphosphate-gated calcium channel ITPR3 (2664 aa).

At 1-2227 (MSEMSSFLHI…YVEGASTGVL (2227 aa)) the chain is on the cytoplasmic side. 5 consecutive MIR domains span residues 113–173 (GDVV…LRSN), 174–224 (GDNV…INLF), 232–288 (EEVL…VEVV), 295–372 (GGAG…LDPT), and 378–434 (DSFV…IVSV). Residues Arg-266, Thr-268, Leu-269, and Arg-270 each coordinate 1D-myo-inositol 1,4,5-trisphosphate. The interval 320–344 (NPSYKGDASDPKAAGTGAQGRTGRR) is disordered. 6 residues coordinate 1D-myo-inositol 1,4,5-trisphosphate: Arg-503, Lys-507, Arg-510, Tyr-567, Arg-568, and Lys-569. Arg-743 provides a ligand contact to Ca(2+). Phosphoserine is present on residues Ser-909 and Ser-927. Residues Glu-1115 and Glu-1118 each contribute to the Ca(2+) site. 2 disordered regions span residues 1124–1158 (KGAS…GEKS) and 1790–1850 (QQET…VGER). The segment covering 1792–1805 (ETKSTVAVNMSDLG) has biased composition (polar residues). Residues Ser-1806, Ser-1825, and Ser-1827 each carry the phosphoserine modification. Positions 1875 and 1939 each coordinate Ca(2+). ATP is bound by residues Ala-1989, Glu-2142, and Lys-2145. The helical transmembrane segment at 2228-2248 (GSPLISLLFWILICFSIAALF) threads the bilayer. Topologically, residues 2249 to 2256 (TKRYSVRP) are extracellular. The chain crosses the membrane as a helical span at residues 2257 to 2277 (LIVALILRSIYYLGIGPTLNI). Residues 2278-2286 (LGALNLTNK) lie on the Cytoplasmic side of the membrane. A helical membrane pass occupies residues 2287 to 2304 (IVFVVSFVGNRGTFIRGY). Residues 2305–2318 (KAMVMDMEFLYHVG) are Extracellular-facing. A helical membrane pass occupies residues 2319 to 2339 (YILTSVLGLFAHELFYSILLF). Over 2340 to 2361 (DLIYREETLFNVIKSVTRNGRS) the chain is Cytoplasmic. Residues 2362–2382 (ILLTALLALILVYLFSIVGFL) form a helical membrane-spanning segment. Over 2383–2489 (FLKDDFILEV…ESLFPARVVY (107 aa)) the chain is Extracellular. An intrachain disulfide couples Cys-2448 to Cys-2454. Residues 2490-2510 (DLLFFFIVIIIVLNLIFGVII) form a helical membrane-spanning segment. The Cytoplasmic portion of the chain corresponds to 2511–2664 (DTFADLRSEK…FVDVQNCMSR (154 aa)). ATP-binding residues include Cys-2531 and Phe-2532. Residue Cys-2531 participates in Zn(2+) binding. Residues Cys-2534 and His-2551 each contribute to the Zn(2+) site. Lys-2553, His-2556, Asn-2557, and Met-2558 together coordinate ATP. His-2556 lines the Zn(2+) pocket. Thr-2574 is a Ca(2+) binding site. Residues Ser-2602 and Ser-2663 each carry the phosphoserine modification.

It belongs to the InsP3 receptor family. Homotetramer. Homodimer. Interacts with TRPC1, TRPC3 and TRPC4. Interacts with TRPV4. Interacts with SIGMAR1. Interacts with PML and AKT1. Interacts with IRAG2 (via coiled-coil domain). Interacts with CABP1. Interacts with TMBIM4/LFG4. Interacts with CEMIP. Interacts with TESPA1. Interacts with TMEM203. Interacts with BOK; regulates ITPR3 expression. Interacts with BCL2L10. Interacts with CHGA and CHGB. Post-translationally, phosphorylated by AKT1 on serine and/or threonine residues.

It localises to the endoplasmic reticulum membrane. Its subcellular location is the cytoplasmic vesicle. The protein localises to the secretory vesicle membrane. The catalysed reaction is Ca(2+)(in) = Ca(2+)(out). Inositol 1,4,5-trisphosphate-gated calcium channel is regulated by cytosolic calcium in a biphasic manner. At low concentrations, cytosolic calcium binds at a high-affinity juxtamembrane domain (JD) calcium binding site, allowing ITPR3 to activate by escaping a low-energy resting state through an ensemble of preactivated states. At high cytosolic calcium concentrations, ITPR3 preferentially enters an inhibited state stabilized by calcium binding at a second, low-affinity cytoplasmic domain (CD) calcium binding site. Its function is as follows. Inositol 1,4,5-trisphosphate-gated calcium channel that, upon 1D-myo-inositol 1,4,5-trisphosphate binding, transports calcium from the endoplasmic reticulum lumen to cytoplasm, thus releasing the intracellular calcium and therefore participates in cellular calcium ion homeostasis. 1D-myo-inositol 1,4,5-trisphosphate binds to the ligand-free channel without altering its global conformation, yielding the low-energy resting state, then progresses through resting-to preactivated transitions to the higher energy preactivated state, which increases affinity for calcium, promoting binding of the low basal cytosolic calcium at the juxtamembrane domain (JD) site, favoring the transition through the ensemble of high-energy intermediate states along the trajectory to the fully-open activated state. Upon opening, releases calcium in the cytosol where it can bind to the low-affinity cytoplasmic domain (CD) site and stabilizes the inhibited state to terminate calcium release. This chain is Inositol 1,4,5-trisphosphate-gated calcium channel ITPR3, found in Bos taurus (Bovine).